Here is a 469-residue protein sequence, read N- to C-terminus: 1-aminocyclopropane-1-carboxylate synthase 3 (469 aa).

Lys-272 is modified (N6-(pyridoxal phosphate)lysine). The disordered stretch occupies residues 432–452; sequence APNATNHQNQQQSNANSKKKS. Low complexity predominate over residues 437–447; sequence NHQNQQQSNAN.

This sequence belongs to the class-I pyridoxal-phosphate-dependent aminotransferase family. In terms of assembly, homodimer. Pyridoxal 5'-phosphate serves as cofactor.

The enzyme catalyses S-adenosyl-L-methionine = 1-aminocyclopropane-1-carboxylate + S-methyl-5'-thioadenosine + H(+). It participates in alkene biosynthesis; ethylene biosynthesis via S-adenosyl-L-methionine; ethylene from S-adenosyl-L-methionine: step 1/2. Catalyzes the formation of 1-aminocyclopropane-1-carboxylate, a direct precursor of ethylene in higher plants. This is 1-aminocyclopropane-1-carboxylate synthase 3 (ACS3) from Solanum lycopersicum (Tomato).